The primary structure comprises 630 residues: Sorting nexin-4 (630 aa).

Polar residues-rich tracts occupy residues 1–11 (MSSEDQFTSIQ) and 19–28 (NTNNTPTDTT). The segment at 1-143 (MSSEDQFTSI…QQPQQQLASI (143 aa)) is disordered. Residues 32 to 49 (KSSKSKKSKKSSSKKKNG) show a composition bias toward basic residues. Residues 50–60 (NKISPSSTTET) show a composition bias toward low complexity. The segment covering 81-94 (DDNHEVDDGNKEQN) has biased composition (basic and acidic residues). Over residues 130 to 143 (QQQLQQPQQQLASI) the composition is skewed to low complexity. Residues 187-321 (SIKTTVTHPN…HLFISNSNDW (135 aa)) enclose the PX domain. A 1,2-diacyl-sn-glycero-3-phospho-(1D-myo-inositol-3-phosphate)-binding residues include Arg-243, Lys-269, and Arg-288. 2 coiled-coil regions span residues 361–413 (SKHK…SNQI) and 550–581 (TIKSDKIKNLEQEIAKETKILTDLTNKIINEE).

This sequence belongs to the sorting nexin family.

It localises to the cytoplasm. The protein localises to the cytosol. The protein resides in the preautophagosomal structure membrane. It is found in the endosome membrane. Its function is as follows. Sorting nexin, involved in the separation or division of vacuoles throughout the entire life cycle of the cells. Involved in retrieval of late-Golgi SNAREs from post-Golgi endosomes to the trans-Golgi network, for cytoplasm to vacuole transport (Cvt), and autophagy of large cargos including mitophagy, pexophagy and glycophagy. This Candida albicans (strain SC5314 / ATCC MYA-2876) (Yeast) protein is Sorting nexin-4 (SNX4).